We begin with the raw amino-acid sequence, 317 residues long: Orange carotenoid-binding protein (317 aa).

Residues 18–169 form the OCP N-terminal domain; sequence ADVVPATIAR…DMGFTAGKDG (152 aa). Echinenone contacts are provided by residues 34-38, 37-44, 80-83, 107-117, 125-129, 151-161, Tyr-201, 245-250, 273-284, and Trp-288; these read EDQLA, LALIWFAY, TQAM, LGFWYRLGELM, IPAGY, ITVLRNAVVDM, CQNLKL, and VQTPWFGGNVGM.

Belongs to the orange carotenoid-binding protein family. As to quaternary structure, monomer. Interacts with the APC core of the phycobilisome (PB), probably at a ratio of 1:1 in a light-independent manner; possibly only OCP-R binds to PBs. Interacts with FRP. Detachment from PBs is accelerated by FPR. The cofactor is 3'-hydroxyechinenone. Proteolytically cleaved into a red 16.7 kDa form named red carotenoid-binding protein (RCP) which lacks 15 residues from the N-terminus and approximately 150 residues from the C-terminus.

Its subcellular location is the cellular thylakoid membrane. Functionally, acts as a blue-light photoreceptor and photo-protectant. Essential for inhibiting damaged induced by excess blue-green light via a process known as non-photochemical quenching (NPQ). In the dark or dim light the stable inactive form (OCP-O) is orange, upon illumination with blue-green light it converts to a metastable active red form (OCP-R), inducing energy dissipation, quenching cellular fluorescence via NPQ. One OCP-R molecule is sufficient to quench 1 phycobilisome. More OCP-R accumulates under high-light and low temperature; in the dark OCP-R spontaneously reverts to OCP-O. Reversion of OCP-O is accelerated by FRP. A kinetic study suggests conversion of OCP-O to OCP-R is limited by cis-trans proline isomerization of either Gln224-Pro225 or Pro225-Pro226. In Synechocystis sp. (strain ATCC 27184 / PCC 6803 / Kazusa), this protein is Orange carotenoid-binding protein.